The following is a 286-amino-acid chain: Acetylglutamate kinase (286 aa).

Substrate-binding positions include 70-71 (GG), Arg-92, and Asn-184.

It belongs to the acetylglutamate kinase family. ArgB subfamily.

The protein localises to the cytoplasm. The enzyme catalyses N-acetyl-L-glutamate + ATP = N-acetyl-L-glutamyl 5-phosphate + ADP. It participates in amino-acid biosynthesis; L-arginine biosynthesis; N(2)-acetyl-L-ornithine from L-glutamate: step 2/4. Catalyzes the ATP-dependent phosphorylation of N-acetyl-L-glutamate. This is Acetylglutamate kinase from Ruegeria sp. (strain TM1040) (Silicibacter sp.).